We begin with the raw amino-acid sequence, 703 residues long: Protein FAR1-RELATED SEQUENCE 6 (703 aa).

A disordered region spans residues 1-29; that stretch reads MERSESVDEDVQASAYLENDEVRERDDPM. The region spanning 99 to 184 is the FAR1 domain; that stretch reads NYYNCYASEV…TLDHNHLLGC (86 aa). One can recognise an MULE domain in the interval 297–392; the sequence is VIFIDSSYIS…SLTHIMRKIP (96 aa). An SWIM-type zinc finger spans residues 584–620; the sequence is FEVLYNRSVGEVRCICSCFNFYGYLCRHALCVLNFNG.

This sequence belongs to the FHY3/FAR1 family. In terms of tissue distribution, expressed in hypocotyls, rosette and cauline leaves, inflorescences stems, flowers and siliques.

Its subcellular location is the nucleus. In terms of biological role, putative transcription activator involved in regulating light control of development. May have a role in controlling flowering time. The protein is Protein FAR1-RELATED SEQUENCE 6 (FRS6) of Arabidopsis thaliana (Mouse-ear cress).